The chain runs to 179 residues: ATP synthase subunit delta (179 aa).

It belongs to the ATPase delta chain family. As to quaternary structure, F-type ATPases have 2 components, F(1) - the catalytic core - and F(0) - the membrane proton channel. F(1) has five subunits: alpha(3), beta(3), gamma(1), delta(1), epsilon(1). F(0) has three main subunits: a(1), b(2) and c(10-14). The alpha and beta chains form an alternating ring which encloses part of the gamma chain. F(1) is attached to F(0) by a central stalk formed by the gamma and epsilon chains, while a peripheral stalk is formed by the delta and b chains.

Its subcellular location is the cell inner membrane. In terms of biological role, f(1)F(0) ATP synthase produces ATP from ADP in the presence of a proton or sodium gradient. F-type ATPases consist of two structural domains, F(1) containing the extramembraneous catalytic core and F(0) containing the membrane proton channel, linked together by a central stalk and a peripheral stalk. During catalysis, ATP synthesis in the catalytic domain of F(1) is coupled via a rotary mechanism of the central stalk subunits to proton translocation. Its function is as follows. This protein is part of the stalk that links CF(0) to CF(1). It either transmits conformational changes from CF(0) to CF(1) or is implicated in proton conduction. The protein is ATP synthase subunit delta of Paraburkholderia phytofirmans (strain DSM 17436 / LMG 22146 / PsJN) (Burkholderia phytofirmans).